The sequence spans 504 residues: Anaerobic nitric oxide reductase transcription regulator NorR (504 aa).

A 4-aspartylphosphate modification is found at Asp57. The 230-residue stretch at Met187–Val416 folds into the Sigma-54 factor interaction domain. Residues Gly215–Glu222 and Ala278–Glu287 contribute to the ATP site. A DNA-binding region (H-T-H motif) is located at residues Trp479–Lys498.

Its pathway is nitrogen metabolism; nitric oxide reduction. Its function is as follows. Required for the expression of anaerobic nitric oxide (NO) reductase, acts as a transcriptional activator for at least the norVW operon. Activation also requires sigma-54. This Escherichia coli O9:H4 (strain HS) protein is Anaerobic nitric oxide reductase transcription regulator NorR.